The chain runs to 375 residues: 4-hydroxy-3-methylbut-2-en-1-yl diphosphate synthase (flavodoxin) (375 aa).

Residues cysteine 268, cysteine 271, cysteine 303, and glutamate 310 each coordinate [4Fe-4S] cluster.

Belongs to the IspG family. [4Fe-4S] cluster is required as a cofactor.

It carries out the reaction (2E)-4-hydroxy-3-methylbut-2-enyl diphosphate + oxidized [flavodoxin] + H2O + 2 H(+) = 2-C-methyl-D-erythritol 2,4-cyclic diphosphate + reduced [flavodoxin]. It participates in isoprenoid biosynthesis; isopentenyl diphosphate biosynthesis via DXP pathway; isopentenyl diphosphate from 1-deoxy-D-xylulose 5-phosphate: step 5/6. Its function is as follows. Converts 2C-methyl-D-erythritol 2,4-cyclodiphosphate (ME-2,4cPP) into 1-hydroxy-2-methyl-2-(E)-butenyl 4-diphosphate. The polypeptide is 4-hydroxy-3-methylbut-2-en-1-yl diphosphate synthase (flavodoxin) (Bacillus velezensis (strain DSM 23117 / BGSC 10A6 / LMG 26770 / FZB42) (Bacillus amyloliquefaciens subsp. plantarum)).